A 225-amino-acid chain; its full sequence is Putative amino-acid transporter YggA (225 aa).

5 helical membrane-spanning segments follow: residues 1–21, 37–57, 65–85, 116–136, and 150–170; these read MFAT…PIGA, LLTA…GVFG, SPIG…WFGI, LGVT…LGSF, and AVAM…AVVL.

The protein belongs to the LysE/ArgO transporter (TC 2.A.75) family.

Its subcellular location is the cell membrane. The sequence is that of Putative amino-acid transporter YggA from Aeromonas hydrophila.